Consider the following 109-residue polypeptide: Transmembrane protein 233 (109 aa).

The tract at residues 1–30 is disordered; sequence MSQYAPSPDFKRALDSSPEANTEDDKTEED. Residues 1-41 are Cytoplasmic-facing; that stretch reads MSQYAPSPDFKRALDSSPEANTEDDKTEEDVPMPKNYLWLT. The span at 21 to 30 shows a compositional bias: acidic residues; it reads NTEDDKTEED. Positions 42 to 62 form an intramembrane region, helical; the sequence is IVSCFCPAYPINIVALVFSIM. The Cytoplasmic portion of the chain corresponds to 63–84; sequence SLNSYNDGDYEGARRLGRNAKW. A helical membrane pass occupies residues 85–105; that stretch reads VAIASIIIGLLIIGISCAVHF. The Extracellular portion of the chain corresponds to 106 to 109; that stretch reads TRNA.

It belongs to the CD225/Dispanin family. As to quaternary structure, interacts with the giant stinging tree toxin ExTxA (AC P0DQP3). Interacts with Nav1.7/SCN9A. Interacts with Nav1.1/SCN1A, Nav1.2/SCN2A, Nav1.3/SCN3A, Nav1.4/SCN4A, Nav1.5/SCN5A, and Nav1.6/SCN8A.

The protein localises to the cell membrane. Functionally, probable accessory protein of voltage-gated sodium channels. This Homo sapiens (Human) protein is Transmembrane protein 233.